Consider the following 347-residue polypeptide: Cell shape-determining protein MreB (347 aa).

Residues 19–21, 165–167, 213–216, and 295–298 each bind ATP; these read TAN, GGT, ERIK, and GGAL.

It belongs to the FtsA/MreB family. In terms of assembly, forms polymers in the presence of ATP. Forms pairs of protofilaments that adopt an antiparallel arrangement and bind to lipids.

It is found in the cytoplasm. Forms membrane-associated dynamic filaments that are essential for cell shape determination. Acts by regulating cell wall synthesis and cell elongation, and thus cell shape. A feedback loop between cell geometry and MreB localization may maintain elongated cell shape by targeting cell wall growth to regions of negative cell wall curvature. Required for mid-cell peptidoglycan synthesis and cell division. Directs the localization of the cytosolic peptidoglycan precursor-synthesizing enzyme MurG. Also required for proper chromosome segregation. Directs the segregation of origin-proximal but not origin-distal loci. The polypeptide is Cell shape-determining protein MreB (Caulobacter vibrioides (strain NA1000 / CB15N) (Caulobacter crescentus)).